Reading from the N-terminus, the 222-residue chain is Gamma-glutamylcyclotransferase and putative RNase MJ0434 (222 aa).

Residue Arg75 is part of the active site. The short motif at Arg75–Tyr82 is the RX(4)HXY motif element. Residue Tyr82 is modified to O-di-AMP-tyrosine.

The protein in the N-terminal section; belongs to the HepT RNase toxin family. In the C-terminal section; belongs to the gamma-glutamylcyclotransferase family. In terms of assembly, homodimer, probably forms a complex with cognate antitoxin MJ0435. Post-translationally, modified by cognate antitoxin MJ0435; probably at least 2 successive AMPylation events occur on Tyr-82.

Functionally, probable toxic component of a putative type VII toxin-antitoxin (TA) system, probably an RNase. Probably neutralized by cognate antitoxin MJ0435. Neutralization may be due to AMPylation by MJ0435. The chain is Gamma-glutamylcyclotransferase and putative RNase MJ0434 from Methanocaldococcus jannaschii (strain ATCC 43067 / DSM 2661 / JAL-1 / JCM 10045 / NBRC 100440) (Methanococcus jannaschii).